We begin with the raw amino-acid sequence, 655 residues long: Very long-chain specific acyl-CoA dehydrogenase, mitochondrial (655 aa).

The N-terminal 40 residues, 1–40 (MQAARIAPSLGRQLLRFGGGSSRPTALLGQPWPGPARRPY), are a transit peptide targeting the mitochondrion. Residues 41–482 (AGGAAQLALD…ALQGCMDKGK (442 aa)) form a catalytic region. An N6-acetyllysine modification is found at K51. N6-acetyllysine; alternate is present on K71. The residue at position 71 (K71) is an N6-succinyllysine; alternate. K195 carries the post-translational modification N6-succinyllysine. 214–223 (FCLTEPSSGS) contacts FAD. The residue at position 237 (C237) is an S-nitrosocysteine. K239 carries the N6-acetyllysine; alternate modification. K239 bears the N6-succinyllysine; alternate mark. 249 to 251 (WIS) lines the FAD pocket. K276 and K278 each carry N6-acetyllysine; alternate. Residues K276 and K278 each carry the N6-succinyllysine; alternate modification. K298 is modified (N6-acetyllysine). The residue at position 331 (K331) is an N6-acetyllysine; alternate. K331 is subject to N6-succinyllysine; alternate. The residue at position 372 (K372) is an N6-succinyllysine. Position 461–463 (461–463 (FEG)) interacts with substrate. E462 (proton acceptor) is an active-site residue. 464 to 466 (TND) lines the FAD pocket. An N6-acetyllysine; alternate modification is found at K482. N6-succinyllysine; alternate is present on K482. A membrane-anchoring region spans residues 483 to 516 (ELSGLGSALKNPFGNAGLLLGEAGKQLRRRAGLG). A phosphoserine mark is found at S517 and S522. N6-acetyllysine is present on K550. K556 carries the post-translational modification N6-acetyllysine; alternate. At K556 the chain carries N6-succinyllysine; alternate. Q562 contributes to the FAD binding site. K639 is modified (N6-succinyllysine).

This sequence belongs to the acyl-CoA dehydrogenase family. In terms of assembly, homodimer. Homodimerizes after import into the mitochondrion. FAD is required as a cofactor. In terms of processing, S-nitrosylation at Cys-237 in liver improves catalytic efficiency.

The protein localises to the mitochondrion inner membrane. It catalyses the reaction a very-long-chain 2,3-saturated fatty acyl-CoA + oxidized [electron-transfer flavoprotein] + H(+) = a very-long-chain (2E)-enoyl-CoA + reduced [electron-transfer flavoprotein]. The enzyme catalyses dodecanoyl-CoA + oxidized [electron-transfer flavoprotein] + H(+) = (2E)-dodecenoyl-CoA + reduced [electron-transfer flavoprotein]. The catalysed reaction is tetradecanoyl-CoA + oxidized [electron-transfer flavoprotein] + H(+) = (2E)-tetradecenoyl-CoA + reduced [electron-transfer flavoprotein]. It carries out the reaction oxidized [electron-transfer flavoprotein] + hexadecanoyl-CoA + H(+) = (2E)-hexadecenoyl-CoA + reduced [electron-transfer flavoprotein]. It catalyses the reaction octadecanoyl-CoA + oxidized [electron-transfer flavoprotein] + H(+) = (2E)-octadecenoyl-CoA + reduced [electron-transfer flavoprotein]. The enzyme catalyses eicosanoyl-CoA + oxidized [electron-transfer flavoprotein] + H(+) = (2E)-eicosenoyl-CoA + reduced [electron-transfer flavoprotein]. The catalysed reaction is docosanoyl-CoA + oxidized [electron-transfer flavoprotein] + H(+) = (2E)-docosenoyl-CoA + reduced [electron-transfer flavoprotein]. It carries out the reaction tetracosanoyl-CoA + oxidized [electron-transfer flavoprotein] + H(+) = (2E)-tetracosenoyl-CoA + reduced [electron-transfer flavoprotein]. Its pathway is lipid metabolism; mitochondrial fatty acid beta-oxidation. Very long-chain specific acyl-CoA dehydrogenase is one of the acyl-CoA dehydrogenases that catalyze the first step of mitochondrial fatty acid beta-oxidation, an aerobic process breaking down fatty acids into acetyl-CoA and allowing the production of energy from fats. The first step of fatty acid beta-oxidation consists in the removal of one hydrogen from C-2 and C-3 of the straight-chain fatty acyl-CoA thioester, resulting in the formation of trans-2-enoyl-CoA. Among the different mitochondrial acyl-CoA dehydrogenases, very long-chain specific acyl-CoA dehydrogenase acts specifically on acyl-CoAs with saturated 12 to 24 carbons long primary chains. In Macaca fascicularis (Crab-eating macaque), this protein is Very long-chain specific acyl-CoA dehydrogenase, mitochondrial.